The chain runs to 153 residues: Cofilin (153 aa).

One can recognise an ADF-H domain in the interval 4-148 (SGATVSQDCI…EYDSILKTVS (145 aa)).

It belongs to the actin-binding proteins ADF family.

The protein resides in the cytoplasm. Its subcellular location is the cytoskeleton. It localises to the nucleus matrix. Functionally, controls reversibly actin polymerization and depolymerization in a pH-sensitive manner. It has the ability to bind G- and F-actin in a 1:1 ratio of cofilin to actin. Binding to F-actin is regulated by tropomyosin. It is the major component of intranuclear and cytoplasmic actin rods. Required for accumulation of actin at the cell division site via depolymerizing actin at the cell ends. In association with myosin II has a role in the assembly of the contractile ring via severing actin filaments. Involved in the maintenance of the contractile ring once formed. In association with profilin and capping protein, has a role in the mitotic reorganization of the actin cytoskeleton. The polypeptide is Cofilin (COF1) (Gibberella zeae (strain ATCC MYA-4620 / CBS 123657 / FGSC 9075 / NRRL 31084 / PH-1) (Wheat head blight fungus)).